A 425-amino-acid chain; its full sequence is Histidinol dehydrogenase (425 aa).

Substrate-binding residues include Ser-231, Gln-253, and His-256. Positions 253 and 256 each coordinate Zn(2+). Catalysis depends on proton acceptor residues Glu-321 and His-322. Residues His-322, Asp-355, Glu-409, and His-414 each coordinate substrate. Asp-355 contributes to the Zn(2+) binding site. Residue His-414 participates in Zn(2+) binding.

The protein belongs to the histidinol dehydrogenase family. The cofactor is Zn(2+).

It catalyses the reaction L-histidinol + 2 NAD(+) + H2O = L-histidine + 2 NADH + 3 H(+). Its pathway is amino-acid biosynthesis; L-histidine biosynthesis; L-histidine from 5-phospho-alpha-D-ribose 1-diphosphate: step 9/9. In terms of biological role, catalyzes the sequential NAD-dependent oxidations of L-histidinol to L-histidinaldehyde and then to L-histidine. The polypeptide is Histidinol dehydrogenase (Carboxydothermus hydrogenoformans (strain ATCC BAA-161 / DSM 6008 / Z-2901)).